Reading from the N-terminus, the 104-residue chain is Pterin-4-alpha-carbinolamine dehydratase (104 aa).

A2 carries the post-translational modification N-acetylalanine. Substrate contacts are provided by residues 61–63 (DHH) and 78–81 (STHD).

Belongs to the pterin-4-alpha-carbinolamine dehydratase family. As to quaternary structure, homotetramer and homodimer.

It localises to the cytoplasm. The protein localises to the nucleus. The enzyme catalyses (4aS,6R)-4a-hydroxy-L-erythro-5,6,7,8-tetrahydrobiopterin = (6R)-L-erythro-6,7-dihydrobiopterin + H2O. Its function is as follows. Involved in tetrahydrobiopterin biosynthesis. Seems to both prevent the formation of 7-pterins and accelerate the formation of quinonoid-BH2. Coactivator for HNF1A-dependent transcription. Regulates the dimerization of homeodomain protein HNF1A and enhances its transcriptional activity. Also acts as a coactivator for HNF1B-dependent transcription. In Xenopus laevis (African clawed frog), this protein is Pterin-4-alpha-carbinolamine dehydratase (pcbd).